We begin with the raw amino-acid sequence, 324 residues long: MNTNINVNGSNYHPYIRDYNNENNNNNNGRNNNTNNNNNGRYNNNNNNNNNNNNNNYNLNMNSTGGSGGSGSSYSYSRSVNRNGVNYNMNYNNNNGYNNNNFNNNYNGQNYNGNFNYNNNNNNLNYNYNNNNNHYIGSGTNNNNNNNNNNNNNNNNNNNNNNNFNYNYNRNFNNNNNRGYGNNRNININNNNNNRLLQNQNQNQQKYYFKSSFLEDPWKKTQHPLPDNCIVPHDGNSNVTVTVTPNSYSYSSSSSSIQPFNDENEITIDSDDENIDRTSNNNNNNNNNNNNSYNVNICRNNSNFNVNENNGGDNNNDNNNDNDS.

A compositionally biased stretch (polar residues) spans 1–11 (MNTNINVNGSN). 3 disordered regions span residues 1–77 (MNTN…YSYS), 132–194 (NNHY…NNNN), and 272–324 (DENI…DNDS). Over residues 21–64 (NENNNNNNGRNNNTNNNNNGRYNNNNNNNNNNNNNNYNLNMNST) the composition is skewed to low complexity. The segment covering 279-324 (SNNNNNNNNNNNNSYNVNICRNNSNFNVNENNGGDNNNDNNNDNDS) has biased composition (low complexity).

This is an uncharacterized protein from Dictyostelium discoideum (Social amoeba).